A 299-amino-acid chain; its full sequence is Phosphoribosylaminoimidazole-succinocarboxamide synthase (299 aa).

The interval 259 to 279 is disordered; the sequence is PESGWDRKSEQPPPPLPQHVV.

It belongs to the SAICAR synthetase family.

It carries out the reaction 5-amino-1-(5-phospho-D-ribosyl)imidazole-4-carboxylate + L-aspartate + ATP = (2S)-2-[5-amino-1-(5-phospho-beta-D-ribosyl)imidazole-4-carboxamido]succinate + ADP + phosphate + 2 H(+). Its pathway is purine metabolism; IMP biosynthesis via de novo pathway; 5-amino-1-(5-phospho-D-ribosyl)imidazole-4-carboxamide from 5-amino-1-(5-phospho-D-ribosyl)imidazole-4-carboxylate: step 1/2. The chain is Phosphoribosylaminoimidazole-succinocarboxamide synthase from Streptomyces avermitilis (strain ATCC 31267 / DSM 46492 / JCM 5070 / NBRC 14893 / NCIMB 12804 / NRRL 8165 / MA-4680).